Reading from the N-terminus, the 310-residue chain is Ribosomal RNA small subunit methyltransferase H (310 aa).

Residues 32–34, Asp52, Phe79, Asp100, and Gln107 contribute to the S-adenosyl-L-methionine site; that span reads GGH.

Belongs to the methyltransferase superfamily. RsmH family.

The protein resides in the cytoplasm. The enzyme catalyses cytidine(1402) in 16S rRNA + S-adenosyl-L-methionine = N(4)-methylcytidine(1402) in 16S rRNA + S-adenosyl-L-homocysteine + H(+). Functionally, specifically methylates the N4 position of cytidine in position 1402 (C1402) of 16S rRNA. This chain is Ribosomal RNA small subunit methyltransferase H, found in Bacillus mycoides (strain KBAB4) (Bacillus weihenstephanensis).